The sequence spans 322 residues: CXXC-type zinc finger protein 5 (322 aa).

Gly residues predominate over residues 1-10 (MSSLGGGSQD). The interval 1 to 100 (MSSLGGGSQD…SGGGSMMGGE (100 aa)) is disordered. Composition is skewed to low complexity over residues 11–20 (AGGSSSSSTN) and 28–52 (SGPKAGAADKSAVVAAATPASVADD). At Thr53 the chain carries Phosphothreonine. The segment covering 87–97 (SSGGSGGGSMM) has biased composition (gly residues). The CXXC-type zinc-finger motif lies at 256–297 (GKKKRKRCGMCAPCRRRINCEQCSSCRNRKTGHQICKFRKCE). Positions 257–262 (KKKRKR) match the Nuclear localization signal motif. 8 residues coordinate Zn(2+): Cys263, Cys266, Cys269, Cys275, Cys278, Cys281, Cys291, and Cys296.

In terms of assembly, interacts with DVL1. Interacts with RBPJ.

It is found in the nucleus. Its subcellular location is the cytoplasm. Functionally, may indirectly participate in activation of the NF-kappa-B and MAPK pathways. Acts as a mediator of BMP4-mediated modulation of canonical Wnt signaling activity in neural stem cells. Required for DNA damage-induced ATM phosphorylation, p53 activation and cell cycle arrest. Involved in myelopoiesis. Binds to the oxygen responsive element of COX4I2 and represses its transcription under hypoxia conditions (4% oxygen), as well as normoxia conditions (20% oxygen). May repress COX4I2 transactivation induced by CHCHD2 and RBPJ. Binds preferentially to DNA containing cytidine-phosphate-guanosine (CpG) dinucleotides over CpH (H=A, T, and C), hemimethylated-CpG and hemimethylated-hydroxymethyl-CpG. The protein is CXXC-type zinc finger protein 5 (CXXC5) of Pongo abelii (Sumatran orangutan).